The sequence spans 202 residues: Small ribosomal subunit protein uS2 (202 aa).

The protein belongs to the universal ribosomal protein uS2 family.

This Methanocorpusculum labreanum (strain ATCC 43576 / DSM 4855 / Z) protein is Small ribosomal subunit protein uS2.